Reading from the N-terminus, the 256-residue chain is Pimeloyl-[acyl-carrier protein] methyl ester esterase (256 aa).

The AB hydrolase-1 domain maps to 15 to 242 (HLVLLHGWGL…AAHAPFISHP (228 aa)). Residues Trp-22, 82–83 (SL), and 143–147 (FLALQ) contribute to the substrate site. Ser-82 serves as the catalytic Nucleophile. Residues Asp-207 and His-235 contribute to the active site. His-235 is a substrate binding site.

The protein belongs to the AB hydrolase superfamily. Carboxylesterase BioH family. In terms of assembly, monomer.

It is found in the cytoplasm. The enzyme catalyses 6-carboxyhexanoyl-[ACP] methyl ester + H2O = 6-carboxyhexanoyl-[ACP] + methanol + H(+). The protein operates within cofactor biosynthesis; biotin biosynthesis. In terms of biological role, the physiological role of BioH is to remove the methyl group introduced by BioC when the pimeloyl moiety is complete. It allows to synthesize pimeloyl-ACP via the fatty acid synthetic pathway through the hydrolysis of the ester bonds of pimeloyl-ACP esters. This is Pimeloyl-[acyl-carrier protein] methyl ester esterase from Shigella dysenteriae serotype 1 (strain Sd197).